A 223-amino-acid chain; its full sequence is Probable transaldolase (223 aa).

Residue lysine 91 is the Schiff-base intermediate with substrate of the active site.

The protein belongs to the transaldolase family. Type 3B subfamily.

It is found in the cytoplasm. It catalyses the reaction D-sedoheptulose 7-phosphate + D-glyceraldehyde 3-phosphate = D-erythrose 4-phosphate + beta-D-fructose 6-phosphate. The protein operates within carbohydrate degradation; pentose phosphate pathway; D-glyceraldehyde 3-phosphate and beta-D-fructose 6-phosphate from D-ribose 5-phosphate and D-xylulose 5-phosphate (non-oxidative stage): step 2/3. Functionally, transaldolase is important for the balance of metabolites in the pentose-phosphate pathway. This Prosthecochloris aestuarii (strain DSM 271 / SK 413) protein is Probable transaldolase.